The chain runs to 453 residues: Glutamyl-tRNA reductase (453 aa).

Residues 50–53 (TCNR), Ser110, 115–117 (EPQ), and Gln121 contribute to the substrate site. Cys51 acts as the Nucleophile in catalysis. 190 to 195 (GAGEMA) lines the NADP(+) pocket. Positions 423–436 (REKVPTDAHADRKP) are enriched in basic and acidic residues. The tract at residues 423–453 (REKVPTDAHADRKPPNFAETSDDFDVTDASE) is disordered. Residues 442 to 453 (TSDDFDVTDASE) are compositionally biased toward acidic residues.

This sequence belongs to the glutamyl-tRNA reductase family. Homodimer.

It catalyses the reaction (S)-4-amino-5-oxopentanoate + tRNA(Glu) + NADP(+) = L-glutamyl-tRNA(Glu) + NADPH + H(+). It functions in the pathway porphyrin-containing compound metabolism; protoporphyrin-IX biosynthesis; 5-aminolevulinate from L-glutamyl-tRNA(Glu): step 1/2. Its function is as follows. Catalyzes the NADPH-dependent reduction of glutamyl-tRNA(Glu) to glutamate 1-semialdehyde (GSA). This chain is Glutamyl-tRNA reductase, found in Solidesulfovibrio magneticus (strain ATCC 700980 / DSM 13731 / RS-1) (Desulfovibrio magneticus).